Consider the following 210-residue polypeptide: Silenced mating-type protein ALPHA2 (210 aa).

Position 1 is an N-acetylmethionine (methionine 1). The segment at 1–102 (MNKIPIKDLL…RSIENDRSNY (102 aa)) is N-terminal domain. Residues 103–128 (QLTQKNKSADGLVFNVVTQDMINKST) form a flexible linker region. Positions 129–191 (KPYRGHRFTK…NRRRKEKTIT (63 aa)) form a DNA-binding region, homeobox; TALE-type. Positions 190–210 (ITIAPELADLLSGEPLAKKKE) are C-terminal tail.

It belongs to the TALE/M-ATYP homeobox family.

Its subcellular location is the nucleus. Its function is as follows. Mating type proteins are sequence specific DNA-binding proteins that act as master switches in yeast differentiation by controlling gene expression in a cell type-specific fashion. Silenced copy of ALPHA2 at HML. The chain is Silenced mating-type protein ALPHA2 (HMLALPHA2) from Saccharomyces cerevisiae (strain ATCC 204508 / S288c) (Baker's yeast).